Consider the following 280-residue polypeptide: DegV domain-containing protein SPy_1698/M5005_Spy1391 (280 aa).

The DegV domain maps to 3–280; that stretch reads WKIVTDSGCD…DGGLLMGYEI (278 aa). Residues Ser-63 and Ser-91 each coordinate hexadecanoate.

In terms of biological role, may bind long-chain fatty acids, such as palmitate, and may play a role in lipid transport or fatty acid metabolism. In Streptococcus pyogenes serotype M1, this protein is DegV domain-containing protein SPy_1698/M5005_Spy1391.